Here is a 77-residue protein sequence, read N- to C-terminus: Defensin-like protein 159 (77 aa).

Positions 1–27 (MAKLSCSYFLVLILVFSAFLMVERAEG) are cleaved as a signal peptide. 4 disulfides stabilise this stretch: C30-C77, C40-C59, C45-C71, and C49-C73.

This sequence belongs to the DEFL family.

The protein localises to the secreted. In Arabidopsis thaliana (Mouse-ear cress), this protein is Defensin-like protein 159 (LCR25).